We begin with the raw amino-acid sequence, 431 residues long: Serine hydroxymethyltransferase (431 aa).

Residues L126 and 130–132 (GHL) contribute to the (6S)-5,6,7,8-tetrahydrofolate site. N6-(pyridoxal phosphate)lysine is present on K235.

Belongs to the SHMT family. As to quaternary structure, homodimer. It depends on pyridoxal 5'-phosphate as a cofactor.

It localises to the cytoplasm. It catalyses the reaction (6R)-5,10-methylene-5,6,7,8-tetrahydrofolate + glycine + H2O = (6S)-5,6,7,8-tetrahydrofolate + L-serine. It participates in one-carbon metabolism; tetrahydrofolate interconversion. The protein operates within amino-acid biosynthesis; glycine biosynthesis; glycine from L-serine: step 1/1. Functionally, catalyzes the reversible interconversion of serine and glycine with tetrahydrofolate (THF) serving as the one-carbon carrier. This reaction serves as the major source of one-carbon groups required for the biosynthesis of purines, thymidylate, methionine, and other important biomolecules. Also exhibits THF-independent aldolase activity toward beta-hydroxyamino acids, producing glycine and aldehydes, via a retro-aldol mechanism. In Nocardia farcinica (strain IFM 10152), this protein is Serine hydroxymethyltransferase.